A 154-amino-acid chain; its full sequence is Transcriptional repressor NrdR (154 aa).

The segment at 3–34 (CPFCGNDETKVLESRQVEEGTAVRRRRECERC) is a zinc-finger region. Residues 49–139 (LIVVKKDGRR…VYREFKDVQR (91 aa)) form the ATP-cone domain.

Belongs to the NrdR family. Zn(2+) is required as a cofactor.

In terms of biological role, negatively regulates transcription of bacterial ribonucleotide reductase nrd genes and operons by binding to NrdR-boxes. This chain is Transcriptional repressor NrdR, found in Desulfitobacterium hafniense (strain DSM 10664 / DCB-2).